The sequence spans 545 residues: Signal peptide peptidase-like 4 (545 aa).

Positions M1–G25 are cleaved as a signal peptide. The Lumenal portion of the chain corresponds to G26 to E193. 2 N-linked (GlcNAc...) asparagine glycosylation sites follow: N81 and N147. The PA domain maps to P90 to K170. Residues V194–S214 form a helical membrane-spanning segment. Residues A215–D246 lie on the Cytoplasmic side of the membrane. A helical transmembrane segment spans residues I247–Y267. The Lumenal segment spans residues K268–E276. The helical transmembrane segment at L277–L297 threads the bilayer. The Cytoplasmic segment spans residues L298–A317. Residues V318–V338 traverse the membrane as a helical segment. The Lumenal segment spans residues Y339–T343. The chain crosses the membrane as a helical span at residues Y344 to V364. The Cytoplasmic portion of the chain corresponds to R365–S373. Residues V374–F394 traverse the membrane as a helical segment. D383 is an active-site residue. The Lumenal segment spans residues H395–G427. The helical transmembrane segment at G428–L448 threads the bilayer. The active site involves D436. Residues R449 to S460 are Cytoplasmic-facing. A helical transmembrane segment spans residues G461 to L481. Topologically, residues N482–D485 are lumenal. A helical membrane pass occupies residues G486 to L506. Residues P490 to L492 carry the PAL motif. Topologically, residues G507–S545 are cytoplasmic.

This sequence belongs to the peptidase A22B family. In terms of processing, glycosylated.

Its subcellular location is the endosome membrane. In terms of biological role, intramembrane-cleaving aspartic protease (I-CLiP) that cleaves type II membrane signal peptides in the hydrophobic plane of the membrane. This chain is Signal peptide peptidase-like 4 (SPPL4), found in Oryza sativa subsp. japonica (Rice).